Reading from the N-terminus, the 323-residue chain is Fatty acid desaturase 4, chloroplastic (323 aa).

The transit peptide at 1–77 (MAVSLPTKYP…PRPNREKLVV (77 aa)) directs the protein to the chloroplast. The next 2 membrane-spanning stretches (helical) occupy residues 101-121 (WVAA…IGGF) and 131-151 (LAGY…HWAI). Residues 170-173 (QGHH) carry the Histidine box-1 motif. The helical transmembrane segment at 204–224 (LAFNDPVFHGFVCTFAFCILF) threads the bilayer. The Histidine box-2 motif lies at 229–233 (HAWAH). Residues 258–262 (HAEHH) carry the Histidine box-3 motif.

Belongs to the fatty acid desaturase CarF family. The cofactor is Fe(2+).

The protein localises to the plastid. The protein resides in the chloroplast membrane. It carries out the reaction a 1-acyl-2-hexadecanoyl-glycerolipid + 2 reduced [2Fe-2S]-[ferredoxin] + O2 + 2 H(+) = a 1-acyl-2-[(3E)-hexadec-3-enoyl]-glycerolipid + 2 oxidized [2Fe-2S]-[ferredoxin] + 2 H2O. The protein operates within lipid metabolism; fatty acid metabolism. Functionally, fatty acid desaturase involved in the production of chloroplast-specific phosphatidylglycerol molecular species containing 16:1(3E). Catalyzes the formation of a trans double bond introduced close to the carboxyl group of palmitic acid, which is specifically esterified to the sn-2 glyceryl carbon of phosphatidylglycerol. This Arabidopsis thaliana (Mouse-ear cress) protein is Fatty acid desaturase 4, chloroplastic.